The sequence spans 44 residues: uncharacterized protein (44 aa).

This is an uncharacterized protein from Vaccinia virus (strain Western Reserve) (VACV).